An 883-amino-acid polypeptide reads, in one-letter code: Alanine--tRNA ligase (883 aa).

The Zn(2+) site is built by histidine 563, histidine 567, cysteine 677, and histidine 681.

This sequence belongs to the class-II aminoacyl-tRNA synthetase family. Requires Zn(2+) as cofactor.

Its subcellular location is the cytoplasm. The enzyme catalyses tRNA(Ala) + L-alanine + ATP = L-alanyl-tRNA(Ala) + AMP + diphosphate. Functionally, catalyzes the attachment of alanine to tRNA(Ala) in a two-step reaction: alanine is first activated by ATP to form Ala-AMP and then transferred to the acceptor end of tRNA(Ala). Also edits incorrectly charged Ser-tRNA(Ala) and Gly-tRNA(Ala) via its editing domain. In Cereibacter sphaeroides (strain ATCC 17025 / ATH 2.4.3) (Rhodobacter sphaeroides), this protein is Alanine--tRNA ligase.